Consider the following 148-residue polypeptide: uncharacterized protein (148 aa).

[4Fe-4S] cluster contacts are provided by C21, C24, C88, and C117.

The protein belongs to the complex I 20 kDa subunit family. [4Fe-4S] cluster serves as cofactor.

This is an uncharacterized protein from Methanocaldococcus jannaschii (strain ATCC 43067 / DSM 2661 / JAL-1 / JCM 10045 / NBRC 100440) (Methanococcus jannaschii).